The chain runs to 176 residues: Ribosome rescue factor SmrB (176 aa).

A Smr domain is found at 93-168; that stretch reads LDLHGYRQSE…GDAALLVLID (76 aa).

This sequence belongs to the SmrB family. Associates with collided ribosomes, but not with correctly translating polysomes.

Functionally, acts as a ribosome collision sensor. Detects stalled/collided disomes (pairs of ribosomes where the leading ribosome is stalled and a second ribosome has collided with it) and endonucleolytically cleaves mRNA at the 5' boundary of the stalled ribosome. Stalled/collided disomes form a new interface (primarily via the 30S subunits) that binds SmrB. Cleaved mRNA becomes available for tmRNA ligation, leading to ribosomal subunit dissociation and rescue of stalled ribosomes. This is Ribosome rescue factor SmrB from Shewanella oneidensis (strain ATCC 700550 / JCM 31522 / CIP 106686 / LMG 19005 / NCIMB 14063 / MR-1).